Consider the following 85-residue polypeptide: Large ribosomal subunit protein bL27 (85 aa).

The disordered stretch occupies residues Met-1–Leu-21.

This sequence belongs to the bacterial ribosomal protein bL27 family.

In Thermus thermophilus (strain ATCC BAA-163 / DSM 7039 / HB27), this protein is Large ribosomal subunit protein bL27.